A 515-amino-acid polypeptide reads, in one-letter code: Slowpoke-binding protein (515 aa).

The interval 1-31 (MFKFNKAAQQQRIDNRNSAVTGHDPFVRPPV) is disordered. Polar residues predominate over residues 7–20 (AAQQQRIDNRNSAV). Phosphoserine is present on residues S54 and S79. The segment covering 73–82 (SSNRSASSEQ) has biased composition (polar residues). Positions 73–94 (SSNRSASSEQDNSDLSEHSEKS) are disordered. Residues 191–203 (NWFLVTDASVRTD) are interaction with Slo. Positions 483–503 (SLSEANSPCTPPSTPHDRRTG) are disordered.

In terms of assembly, interacts specifically with Slo; which activates Slo activity. Interacts with 14-3-3-zeta when phosphorylated. Forms a heterotetrameric complex containing phosphorylated Slob, Slo and 14-3-3-zeta, which represses Slo activity due to the indirect interaction between Slo and 14-3-3-zeta. Phosphorylated. Phosphorylation of Ser-54 and Ser-79 is required for the interaction with 14-3-3-zeta but not with that of Slo. Expressed in head. In larval brain, it is expressed in the mushroom body. Also expressed in larval muscles.

Its subcellular location is the cytoplasm. Functionally, regulator of calcium-activated channel Slo. Increases or decreases the voltage sensitivity of Slo, depending on the absence or presence of 14-3-3-zeta in the complex, respectively. This is Slowpoke-binding protein (Slob) from Drosophila melanogaster (Fruit fly).